The sequence spans 100 residues: Urease subunit gamma (100 aa).

It belongs to the urease gamma subunit family. In terms of assembly, heterotrimer of UreA (gamma), UreB (beta) and UreC (alpha) subunits. Three heterotrimers associate to form the active enzyme.

The protein localises to the cytoplasm. The catalysed reaction is urea + 2 H2O + H(+) = hydrogencarbonate + 2 NH4(+). It functions in the pathway nitrogen metabolism; urea degradation; CO(2) and NH(3) from urea (urease route): step 1/1. The chain is Urease subunit gamma from Mycobacteroides abscessus (strain ATCC 19977 / DSM 44196 / CCUG 20993 / CIP 104536 / JCM 13569 / NCTC 13031 / TMC 1543 / L948) (Mycobacterium abscessus).